A 91-amino-acid polypeptide reads, in one-letter code: Large ribosomal subunit protein uL23 (91 aa).

It belongs to the universal ribosomal protein uL23 family. Part of the 50S ribosomal subunit. Contacts protein L29, and trigger factor when it is bound to the ribosome.

Its function is as follows. One of the early assembly proteins it binds 23S rRNA. One of the proteins that surrounds the polypeptide exit tunnel on the outside of the ribosome. Forms the main docking site for trigger factor binding to the ribosome. This chain is Large ribosomal subunit protein uL23, found in Staphylococcus aureus (strain USA300).